The following is a 129-amino-acid chain: Small ribosomal subunit protein uS11 (129 aa).

This sequence belongs to the universal ribosomal protein uS11 family. As to quaternary structure, part of the 30S ribosomal subunit. Interacts with proteins S7 and S18. Binds to IF-3.

Located on the platform of the 30S subunit, it bridges several disparate RNA helices of the 16S rRNA. Forms part of the Shine-Dalgarno cleft in the 70S ribosome. The protein is Small ribosomal subunit protein uS11 of Caulobacter sp. (strain K31).